The following is a 471-amino-acid chain: MKIKTRFAPSPTGYLHVGGARTALYSWLFARHHGGEFVLRIEDTDLERSTPEAIEAIMDGMNWLNLEWDEGPYFQTKRFDRYNAVIDEMLEAGTAYKCYCSKERLEQLREDQMAKGEKPRYDGRCRHSHEHHADDEPCVVRFANPQDGSVIFDDQIRGPIEFSNQELDDLIIRRTDGSPTYNFCVVVDDWDMEITHVIRGEDHINNTPRQINILKALNAPVPMYAHVSMINGDDGKKLSKRHGAVSVMQYRDDGYLPEALLNYLVRLGWSSGDQEIFTREEMIKLFSLGAVSKSASAFNTDKLLWLNHHYINTLAPEYVATHLQWHIEQENIDTRNGPQLAELVKLLGERCKTLKEMSQSCRYFYEDFSEFDADAAKKHLRPVARQPLEVVRDKLSAITDWSAENVHHAIQATADELEVGMGKVGMPLRVAVTGAGQSPALDVTVHAIGKTRSIERINKALGFIAERESQQ.

Residues Pro9 to Gly19 carry the 'HIGH' region motif. The Zn(2+) site is built by Cys98, Cys100, Cys125, and His127. The 'KMSKS' region motif lies at Lys237–Arg241. Lys240 lines the ATP pocket.

This sequence belongs to the class-I aminoacyl-tRNA synthetase family. Glutamate--tRNA ligase type 1 subfamily. Monomer. It depends on Zn(2+) as a cofactor.

It localises to the cytoplasm. It catalyses the reaction tRNA(Glu) + L-glutamate + ATP = L-glutamyl-tRNA(Glu) + AMP + diphosphate. Functionally, catalyzes the attachment of glutamate to tRNA(Glu) in a two-step reaction: glutamate is first activated by ATP to form Glu-AMP and then transferred to the acceptor end of tRNA(Glu). This is Glutamate--tRNA ligase from Salmonella paratyphi A (strain ATCC 9150 / SARB42).